The chain runs to 72 residues: NAD(P)H-quinone oxidoreductase subunit O (72 aa).

This sequence belongs to the complex I NdhO subunit family. NDH-1 can be composed of about 15 different subunits; different subcomplexes with different compositions have been identified which probably have different functions.

The protein localises to the cellular thylakoid membrane. It catalyses the reaction a plastoquinone + NADH + (n+1) H(+)(in) = a plastoquinol + NAD(+) + n H(+)(out). The enzyme catalyses a plastoquinone + NADPH + (n+1) H(+)(in) = a plastoquinol + NADP(+) + n H(+)(out). NDH-1 shuttles electrons from an unknown electron donor, via FMN and iron-sulfur (Fe-S) centers, to quinones in the respiratory and/or the photosynthetic chain. The immediate electron acceptor for the enzyme in this species is believed to be plastoquinone. Couples the redox reaction to proton translocation, and thus conserves the redox energy in a proton gradient. Cyanobacterial NDH-1 also plays a role in inorganic carbon-concentration. This Gloeothece citriformis (strain PCC 7424) (Cyanothece sp. (strain PCC 7424)) protein is NAD(P)H-quinone oxidoreductase subunit O.